A 218-amino-acid polypeptide reads, in one-letter code: Ras-related protein Rab-27B (218 aa).

At Thr2 the chain carries N-acetylthreonine. 16–24 (GDSGVGKTT) is a binding site for GTP. An Effector region motif is present at residues 38–46 (FITTVGIDF). GTP contacts are provided by residues 74 to 78 (DTAGQ), 133 to 136 (NKAD), and 163 to 165 (SAA). A disulfide bond links Cys123 and Cys188. S-geranylgeranyl cysteine attachment occurs at residues Cys216 and Cys218. A Cysteine methyl ester modification is found at Cys218.

Belongs to the small GTPase superfamily. Rab family. As to quaternary structure, interacts with SYTL2, SYTL4, MYRIP and MLPH. Interacts with RPH3A and RPH3A. Interacts (GDP-bound form preferentially) with DENND10.

It is found in the membrane. Its subcellular location is the late endosome. It carries out the reaction GTP + H2O = GDP + phosphate + H(+). Regulated by guanine nucleotide exchange factors (GEFs) which promote the exchange of bound GDP for free GTP, GTPase activating proteins (GAPs) which increase the GTP hydrolysis activity, and GDP dissociation inhibitors which inhibit the dissociation of the nucleotide from the GTPase. Activated by GEFs such as DENND10. Small GTPase which cycles between active GTP-bound and inactive GDP-bound states. In its active state, binds to a variety of effector proteins to regulate homeostasis of late endocytic pathway, including endosomal positioning, maturation and secretion. Plays a role in NTRK2/TRKB axonal anterograde transport by facilitating the association of NTRK2/TRKB with KLC1. May be involved in targeting uroplakins to urothelial apical membranes. The chain is Ras-related protein Rab-27B (Rab27b) from Rattus norvegicus (Rat).